The following is a 424-amino-acid chain: CAAX prenyl protease 1 homolog (424 aa).

5 helical membrane-spanning segments follow: residues 3-23 (IPFMETVVGFMIVMYIFETYL), 67-87 (EFVTILMDSAILFFGILPWFW), 109-129 (LSFLAGVMTWSQITDLPFSLY), 155-175 (GTFLSVILGPPIVAAIIFIVQ), and 185-205 (LWAFMFILSLVMMTIYPVLIA). Histidine 284 provides a ligand contact to Zn(2+). The active site involves glutamate 285. Histidine 288 is a Zn(2+) binding site. 2 consecutive transmembrane segments (helical) span residues 295 to 315 (TYSFIAVQILAFLQFGGYTLV) and 332 to 352 (VLIGLIIFQHTVIPLQHLVSF). Glutamate 362 contacts Zn(2+). Aspartate 366 acts as the Proton donor in catalysis.

It belongs to the peptidase M48A family. Requires Zn(2+) as cofactor. As to expression, expressed in leaves, stems and flowers.

It localises to the endoplasmic reticulum membrane. The catalysed reaction is Hydrolyzes the peptide bond -P2-(S-farnesyl or geranylgeranyl)C-P1'-P2'-P3'-COOH where P1' and P2' are amino acids with aliphatic side chains and P3' is any C-terminal residue.. In terms of biological role, proteolytically removes the C-terminal three residues of farnesylated proteins. The substrate specificity is only partially overlapping with that of FACE2. The sequence is that of CAAX prenyl protease 1 homolog (FACE1) from Arabidopsis thaliana (Mouse-ear cress).